Reading from the N-terminus, the 294-residue chain is Ribosomal RNA small subunit methyltransferase A (294 aa).

S-adenosyl-L-methionine-binding residues include asparagine 31, leucine 33, glycine 58, glutamate 79, aspartate 111, and asparagine 136.

Belongs to the class I-like SAM-binding methyltransferase superfamily. rRNA adenine N(6)-methyltransferase family. RsmA subfamily.

It is found in the cytoplasm. It catalyses the reaction adenosine(1518)/adenosine(1519) in 16S rRNA + 4 S-adenosyl-L-methionine = N(6)-dimethyladenosine(1518)/N(6)-dimethyladenosine(1519) in 16S rRNA + 4 S-adenosyl-L-homocysteine + 4 H(+). In terms of biological role, specifically dimethylates two adjacent adenosines (A1518 and A1519) in the loop of a conserved hairpin near the 3'-end of 16S rRNA in the 30S particle. May play a critical role in biogenesis of 30S subunits. This Lactobacillus acidophilus (strain ATCC 700396 / NCK56 / N2 / NCFM) protein is Ribosomal RNA small subunit methyltransferase A.